Consider the following 464-residue polypeptide: Divalent metal cation transporter MntH (464 aa).

A run of 11 helical transmembrane segments spans residues 57 to 77 (ILIA…AGGA), 82 to 102 (SLLS…SMAA), 125 to 145 (GIIL…AEII), 157 to 177 (IPLV…LLLM), 186 to 206 (AIVA…VFLA), 229 to 249 (MLYL…LYLG), 281 to 301 (LTIA…LFFG), 321 to 341 (IVGA…LLSS), 376 to 396 (LLSV…EAKI), 399 to 419 (LLTL…VPLV), and 443 to 463 (VATV…VGVI).

Belongs to the NRAMP family.

The protein resides in the cell membrane. Functionally, h(+)-stimulated, divalent metal cation uptake system. This chain is Divalent metal cation transporter MntH, found in Levilactobacillus brevis (Lactobacillus brevis).